Reading from the N-terminus, the 449-residue chain is Naphthalene 1,2-dioxygenase system, large oxygenase component (449 aa).

One can recognise a Rieske domain in the interval 39-137 (WLFLTHDSLI…LDKKCMGLKE (99 aa)). [2Fe-2S] cluster contacts are provided by cysteine 81, histidine 83, cysteine 101, and histidine 104. Fe cation-binding residues include histidine 208, histidine 213, and aspartate 362.

It belongs to the bacterial ring-hydroxylating dioxygenase alpha subunit family. As to quaternary structure, the naphthalene dioxygenase (NDO) multicomponent enzyme system is composed of an electron transfer component and a dioxygenase component (iron sulfur protein (ISP)). The electron transfer component is composed of a ferredoxin reductase (NdoR) and a ferredoxin (NdoA), and the dioxygenase component is formed of a heterohexamer (trimer of heterodimers) of three large alpha subunits (NdoB) and three small beta subunits (NdoC). It depends on [2Fe-2S] cluster as a cofactor. Requires Fe(2+) as cofactor.

It catalyses the reaction naphthalene + NADH + O2 + H(+) = (1R,2S)-1,2-dihydronaphthalene-1,2-diol + NAD(+). Its pathway is aromatic compound metabolism; naphthalene degradation. Its function is as follows. Component of the naphthalene dioxygenase (NDO) multicomponent enzyme system which catalyzes the incorporation of both atoms of molecular oxygen into naphthalene to form cis-(1R,2S)-dihydroxy-1,2-dihydronaphthalene. The alpha subunit has a catalytic role in the holoenzyme. This chain is Naphthalene 1,2-dioxygenase system, large oxygenase component, found in Pseudomonas aeruginosa.